A 478-amino-acid chain; its full sequence is MAQVMDFKVADLSLAEAGRHQIRLAEYEMPGLMQLRKEFADEQPLKGARIAGSIHMTVQTAVLIETLTALGAEVRWASCNIFSTQDEAAAAIVVGSGTVEEPAGVPVFAWKGESLEEYWWCINQIFSWGDELPNMILDDGGDATMAVIRGREYEQAGLVPPAEANDSDEYIAFLGMLREVLAAEPGKWGKIAEAVKGVTEETTTGVHRLYHFAEEGVLPFPAMNVNDAVTKSKFDNKYGTRHSLIDGINRATDMLMGGKNVLVCGYGDVGKGCAEAFDGQGARVKVTEADPINALQALMDGYSVVTVDEAIEDADIVITATGNKDIISFEQMLKMKDHALLGNIGHFDNEIDMHSLLHRDDVTRTTIKPQVDEFTFSTGRSIIVLSEGRLLNLGNATGHPSFVMSNSFADQTIAQIELFQNEGQYENEVYRLPKVLDEKVARIHVEALGGQLTELTKEQAEYIGVDVAGPFKPEHYRY.

The substrate site is built by Thr57, Asp139, and Glu201. 202–204 provides a ligand contact to NAD(+); it reads TTT. Substrate-binding residues include Lys231 and Asp235. Residues Asn236, 265-270, Glu288, Asn323, 344-346, and Asn392 each bind NAD(+); these read GYGDVG and IGH.

It belongs to the adenosylhomocysteinase family. NAD(+) is required as a cofactor.

It localises to the cytoplasm. It catalyses the reaction S-adenosyl-L-homocysteine + H2O = L-homocysteine + adenosine. It functions in the pathway amino-acid biosynthesis; L-homocysteine biosynthesis; L-homocysteine from S-adenosyl-L-homocysteine: step 1/1. Functionally, may play a key role in the regulation of the intracellular concentration of adenosylhomocysteine. This chain is Adenosylhomocysteinase, found in Corynebacterium glutamicum (strain R).